Consider the following 235-residue polypeptide: MEKKEMMYEGKAKKVYSTEDPEKVVIYYKDDATAFNGEKKGQIEDKGVLNNNITSMLFELLEKHGVKTHFEKKLSDREQLCKKVEIVPLEVIVRNVAAGSMAKRLGLEEGYELKTTVFELSYKDDALGDPLINDTHAVAIGATTFEELDKIYAATKTVNDVLKEFFHKQGIKLIDFKIEFGRYNGEVLLADEISPDTCRLWDEKTNEKLDKDRFRRDMGNVKEAYVEILNRITGK.

The protein belongs to the SAICAR synthetase family.

It carries out the reaction 5-amino-1-(5-phospho-D-ribosyl)imidazole-4-carboxylate + L-aspartate + ATP = (2S)-2-[5-amino-1-(5-phospho-beta-D-ribosyl)imidazole-4-carboxamido]succinate + ADP + phosphate + 2 H(+). It functions in the pathway purine metabolism; IMP biosynthesis via de novo pathway; 5-amino-1-(5-phospho-D-ribosyl)imidazole-4-carboxamide from 5-amino-1-(5-phospho-D-ribosyl)imidazole-4-carboxylate: step 1/2. This Clostridium acetobutylicum (strain ATCC 824 / DSM 792 / JCM 1419 / IAM 19013 / LMG 5710 / NBRC 13948 / NRRL B-527 / VKM B-1787 / 2291 / W) protein is Phosphoribosylaminoimidazole-succinocarboxamide synthase.